We begin with the raw amino-acid sequence, 406 residues long: 11-beta-hydroxysteroid dehydrogenase type 2 (406 aa).

T82 to A111 is an NAD(+) binding site. Position 219 (S219) interacts with substrate. The active-site Proton acceptor is the Y232. The interval G379 to R406 is disordered.

It belongs to the short-chain dehydrogenases/reductases (SDR) family. Interacts with ligand-free cytoplasmic NR3C2. In terms of tissue distribution, highly expressed in the kidney.

It is found in the microsome. Its subcellular location is the endoplasmic reticulum. The catalysed reaction is an 11beta-hydroxysteroid + NAD(+) = an 11-oxosteroid + NADH + H(+). It carries out the reaction corticosterone + NAD(+) = 11-dehydrocorticosterone + NADH + H(+). The enzyme catalyses cortisol + NAD(+) = cortisone + NADH + H(+). It catalyses the reaction 11beta,17beta-dihydroxyandrost-4-ene-3-one + NAD(+) = 17beta-hydroxyandrost-4-ene-3,11-dione + NADH + H(+). The catalysed reaction is 11beta-hydroxyandrost-4-ene-3,17-dione + NAD(+) = androst-4-ene-3,11,17-trione + NADH + H(+). It participates in steroid metabolism. Inhibited by carbenoloxone. Catalyzes the conversion of biologically active 11beta-hydroxyglucocorticoids (11beta-hydroxysteroid) such as corticosterone, to inactive 11-ketoglucocorticoids (11-oxosteroid) such as 11-dehydrocorticosterone, in the presence of NAD(+). Functions as a dehydrogenase (oxidase), thereby decreasing the concentration of active glucocorticoids, thus protecting the nonselective mineralocorticoid receptor from occupation by glucocorticoids. Plays an important role in maintaining glucocorticoids balance during preimplantation and protects the fetus from excessive maternal corticosterone exposure. Catalyzes the oxidation of 11beta-hydroxytestosterone (11beta,17beta-dihydroxyandrost-4-ene-3-one) to 11-ketotestosterone (17beta-hydroxyandrost-4-ene-3,11-dione), a major bioactive androgen. Catalyzes the conversion of 11beta-hydroxyandrostenedione (11beta-hydroxyandrost-4-ene-3,17-dione) to 11-ketoandrostenedione (androst-4-ene-3,11,17-trione), which can be further metabolized to 11-ketotestosterone. Converts 7-beta-25-dihydroxycholesterol to 7-oxo-25-hydroxycholesterol in vitro. 7-beta-25-dihydroxycholesterol (not 7-oxo-25-hydroxycholesterol) acts as a ligand for the G-protein-coupled receptor (GPCR) Epstein-Barr virus-induced gene 2 (EBI2) and may thereby regulate immune cell migration. May protect ovulating oocytes and fertilizing spermatozoa from the adverse effects of cortisol. The chain is 11-beta-hydroxysteroid dehydrogenase type 2 (HSD11B2) from Oryctolagus cuniculus (Rabbit).